The chain runs to 106 residues: UPF0145 protein SCO3412 (106 aa).

This sequence belongs to the UPF0145 family.

The protein is UPF0145 protein SCO3412 of Streptomyces coelicolor (strain ATCC BAA-471 / A3(2) / M145).